Reading from the N-terminus, the 357-residue chain is Protein ORF58 (357 aa).

11 helical membrane-spanning segments follow: residues 20 to 40, 44 to 64, 78 to 98, 101 to 121, 132 to 152, 157 to 177, 219 to 239, 242 to 262, 270 to 290, 300 to 320, and 333 to 353; these read LAATPFLWCFIFKALYSFTLF, ITAVFFWSLPVTHLALICMCL, WICASAVFAAVVCAAFSGFTF, VPFIPGLCVLNCLLLLPYPLA, IVHRYYELGFCGAFMVYYLLL, FVSGVFWLPFIVFLVGGLLAF, VVVFVTLLLATLISTASIGLL, VLIGLDKYMTLFYVGLLSCVG, ALFVLLPLAAVLLTLVHILGS, CLCCLFLVSMLAAMGVEIQLI, and MVLALCTVGNLCISCLLSVIN.

This sequence belongs to the herpesviridae BMRF2 family.

The protein resides in the virion membrane. Its subcellular location is the host cell membrane. Participates in rearrangement of cellular actin to increase intercellular contacts and thereby promotes virus cell-to-cell spreadin$g. The sequence is that of Protein ORF58 (ORF58) from Homo sapiens (Human).